Consider the following 523-residue polypeptide: Protein disulfide-isomerase (523 aa).

The first 22 residues, 1–22 (MPGVRSLLLALAGVSLAPAVLA), serve as a signal peptide directing secretion. In terms of domain architecture, Thioredoxin 1 spans 24–137 (DASTDSSDVH…TSYMIKQSLP (114 aa)). Active-site nucleophile residues include Cys-59 and Cys-62. Cys-59 and Cys-62 form a disulfide bridge. Asn-170 carries an N-linked (GlcNAc...) asparagine glycan. Residues 344–475 (VIAGDIAPSV…LANFVRDNGK (132 aa)) form the Thioredoxin 2 domain. Cys-394 and Cys-397 are disulfide-bonded. Composition is skewed to basic and acidic residues over residues 478-502 (VDAY…DAEA) and 512-523 (SEEKADKEHEEL). A disordered region spans residues 478–523 (VDAYDEKKVEKDGSDVTGKPKDAEAPPKPSDAPESEEKADKEHEEL). Residues 520-523 (HEEL) carry the Prevents secretion from ER motif.

It belongs to the protein disulfide isomerase family.

It is found in the endoplasmic reticulum lumen. It catalyses the reaction Catalyzes the rearrangement of -S-S- bonds in proteins.. In terms of biological role, participates in the folding of proteins containing disulfide bonds, may be involved in glycosylation, prolyl hydroxylation and triglyceride transfer. The sequence is that of Protein disulfide-isomerase from Arthroderma benhamiae (strain ATCC MYA-4681 / CBS 112371) (Trichophyton mentagrophytes).